Reading from the N-terminus, the 90-residue chain is MSSGGLLLLLGLLTLWAELTPISGHDRPKFCYLPADPGECMAYIRSFYYDSESKKCKEFIYGGCHGNANNFPTRDKCRQTCRAPRKGRHT.

The N-terminal stretch at 1 to 24 (MSSGGLLLLLGLLTLWAELTPISG) is a signal peptide. Residues 31 to 81 (CYLPADPGECMAYIRSFYYDSESKKCKEFIYGGCHGNANNFPTRDKCRQTC) enclose the BPTI/Kunitz inhibitor domain. Intrachain disulfides connect cysteine 31–cysteine 81, cysteine 40–cysteine 64, and cysteine 56–cysteine 77. A propeptide spanning residues 85–90 (RKGRHT) is cleaved from the precursor.

It belongs to the venom Kunitz-type family. Expressed by the venom gland.

The protein localises to the secreted. In terms of biological role, serine protease inhibitor. The chain is Kunitz-type serine protease inhibitor C4 from Daboia siamensis (Eastern Russel's viper).